The following is a 324-amino-acid chain: MNEKVILFTAGLAFIITVVLSPIFIPFLRRLKFGQSIREEGPKSHQKKSGTPTMGGLMILLSLSITTWLMSDIFFERTAHTYMLLFVTVGYGLLGFIDDFIKVVMKRNLGLTSKQKLAGQLLIALIFYFFFQHYSMSTVVSIPGTDVSLDLGVAYVLLIIFMLVGGSNAVNLTDGLDGLLAGTAAIAFGAYAVLAWNQGQYDVAIFSVAVVGAVLGFLVFNAHPAKVFMGDTGSLALGGAIVTIAILTKLEILLVIIGGVFVIETLSVIIQVISFKTTGKRVFRMSPLHHHYELIGWSEWRVVVTFWAVGLLFAILGIYIEVWV.

The next 10 helical transmembrane spans lie at 5–25 (VILFTAGLAFIITVVLSPIFI), 55–75 (GGLMILLSLSITTWLMSDIFF), 81–101 (TYMLLFVTVGYGLLGFIDDFI), 122–142 (LIALIFYFFFQHYSMSTVVSI), 147–167 (VSLDLGVAYVLLIIFMLVGGS), 176–196 (LDGLLAGTAAIAFGAYAVLAW), 203–223 (VAIFSVAVVGAVLGFLVFNAH), 227–247 (VFMGDTGSLALGGAIVTIAIL), 250–270 (LEILLVIIGGVFVIETLSVII), and 302–322 (VVVTFWAVGLLFAILGIYIEV).

It belongs to the glycosyltransferase 4 family. MraY subfamily. It depends on Mg(2+) as a cofactor.

Its subcellular location is the cell membrane. It carries out the reaction UDP-N-acetyl-alpha-D-muramoyl-L-alanyl-gamma-D-glutamyl-meso-2,6-diaminopimeloyl-D-alanyl-D-alanine + di-trans,octa-cis-undecaprenyl phosphate = di-trans,octa-cis-undecaprenyl diphospho-N-acetyl-alpha-D-muramoyl-L-alanyl-D-glutamyl-meso-2,6-diaminopimeloyl-D-alanyl-D-alanine + UMP. The protein operates within cell wall biogenesis; peptidoglycan biosynthesis. Its function is as follows. Catalyzes the initial step of the lipid cycle reactions in the biosynthesis of the cell wall peptidoglycan: transfers peptidoglycan precursor phospho-MurNAc-pentapeptide from UDP-MurNAc-pentapeptide onto the lipid carrier undecaprenyl phosphate, yielding undecaprenyl-pyrophosphoryl-MurNAc-pentapeptide, known as lipid I. The chain is Phospho-N-acetylmuramoyl-pentapeptide-transferase from Anoxybacillus flavithermus (strain DSM 21510 / WK1).